Here is a 561-residue protein sequence, read N- to C-terminus: 7-keto 8-aminopelargonic acid transporter (561 aa).

Residues 1–49 (MNRVGAVFLFVYERNFFLSIVPDRHRTEIRMSSSERSEVKFDKHFNWWS) are Cytoplasmic-facing. Residues 50–70 (LLGIAFSLSCSWVGISASMAV) traverse the membrane as a helical segment. Topologically, residues 71 to 77 (GIASGGP) are extracellular. The chain crosses the membrane as a helical span at residues 78 to 98 (LLIIYGLIIAAFFSLMCGISL). Over 99–160 (GDFAAILPNS…NVEVSSKFQK (62 aa)) the chain is Cytoplasmic. Residues 161 to 181 (VSSMVVGLLNYFGAIFTTASI) traverse the membrane as a helical segment. Over 182 to 204 (CSSLSMSCIGIHKLLHPDYELKH) the chain is Extracellular. A helical transmembrane segment spans residues 205 to 225 (WHVFVGYECINAVLTLFNIYS). Topologically, residues 226-230 (TPLPY) are cytoplasmic. Residues 231–251 (ISQFGLYTSLLSFAMTFIICI) form a helical membrane-spanning segment. At 252–281 (VSRSDNTVDPWPKASNIFGSFDNQTGWNSS) the chain is on the extracellular side. A helical membrane pass occupies residues 282-302 (GMAFVVGLVNPIWAFVGIDSA). Topologically, residues 303-321 (THMIDEVGYSKSRFLVPKV) are cytoplasmic. Residues 322 to 342 (IITTIIVGFVTSFIYCVGLFF) form a helical membrane-spanning segment. Over 343-369 (CITDQTAVVESILPIVEIFYQATGNRN) the chain is Extracellular. Residues 370-390 (LSVFLQCMCITTGFVSGIASG) traverse the membrane as a helical segment. Topologically, residues 391–439 (TWQSRILQSFGKSYAPFYKEGSLGNKSLKKLAVLTPGFKSPLYAHFLSQ) are cytoplasmic. A helical transmembrane segment spans residues 440–460 (ICVTIIGCIFMGSSTAFNAII). T461 is a topological domain (extracellular). The helical transmembrane segment at 462 to 482 (ACITLLLMSYAVPSFIFLFVI) threads the bilayer. Topologically, residues 483–507 (KKEKFIHRIESDVNCVSRPNRRRMS) are cytoplasmic. The chain crosses the membrane as a helical span at residues 508–528 (MIPHIICILWTLFCLVFLSFP). Residues 529-540 (YTLPVTAGNMNY) lie on the Extracellular side of the membrane. A helical membrane pass occupies residues 541 to 560 (TSVVYAVVFCIISIVVFPTC). Residue I561 is a topological domain, cytoplasmic.

The protein belongs to the amino acid-polyamine-organocation (APC) superfamily.

Its subcellular location is the membrane. Its function is as follows. Transport into the cell of 7-keto 8-aminopelargonic acid. This chain is 7-keto 8-aminopelargonic acid transporter (BIO5), found in Saccharomyces cerevisiae (strain ATCC 204508 / S288c) (Baker's yeast).